Here is a 505-residue protein sequence, read N- to C-terminus: Maturase K (505 aa).

It belongs to the intron maturase 2 family. MatK subfamily.

It localises to the plastid. The protein localises to the chloroplast. In terms of biological role, usually encoded in the trnK tRNA gene intron. Probably assists in splicing its own and other chloroplast group II introns. The polypeptide is Maturase K (Beta vulgaris (Sugar beet)).